Reading from the N-terminus, the 144-residue chain is NADH-ubiquinone oxidoreductase chain 6 (144 aa).

5 helical membrane passes run 1-21, 25-45, 46-66, 79-99, and 108-128; these read MVKV…INID, SSFF…MSMH, IWFS…ILVY, YMAV…VLTY, and FYYS…LFFM.

Belongs to the complex I subunit 6 family.

It localises to the mitochondrion membrane. The enzyme catalyses a ubiquinone + NADH + 5 H(+)(in) = a ubiquinol + NAD(+) + 4 H(+)(out). Its function is as follows. Core subunit of the mitochondrial membrane respiratory chain NADH dehydrogenase (Complex I) that is believed to belong to the minimal assembly required for catalysis. Complex I functions in the transfer of electrons from NADH to the respiratory chain. The immediate electron acceptor for the enzyme is believed to be ubiquinone. This is NADH-ubiquinone oxidoreductase chain 6 from Caenorhabditis elegans.